A 390-amino-acid chain; its full sequence is NADH-quinone oxidoreductase subunit D (390 aa).

This sequence belongs to the complex I 49 kDa subunit family. In terms of assembly, NDH-1 is composed of 14 different subunits. Subunits NuoB, C, D, E, F, and G constitute the peripheral sector of the complex.

The protein resides in the cell inner membrane. It catalyses the reaction a quinone + NADH + 5 H(+)(in) = a quinol + NAD(+) + 4 H(+)(out). Its function is as follows. NDH-1 shuttles electrons from NADH, via FMN and iron-sulfur (Fe-S) centers, to quinones in the respiratory chain. The immediate electron acceptor for the enzyme in this species is believed to be ubiquinone. Couples the redox reaction to proton translocation (for every two electrons transferred, four hydrogen ions are translocated across the cytoplasmic membrane), and thus conserves the redox energy in a proton gradient. The protein is NADH-quinone oxidoreductase subunit D of Geobacter metallireducens (strain ATCC 53774 / DSM 7210 / GS-15).